The primary structure comprises 141 residues: Large ribosomal subunit protein uL11 (141 aa).

Belongs to the universal ribosomal protein uL11 family. In terms of assembly, part of the ribosomal stalk of the 50S ribosomal subunit. Interacts with L10 and the large rRNA to form the base of the stalk. L10 forms an elongated spine to which L12 dimers bind in a sequential fashion forming a multimeric L10(L12)X complex. In terms of processing, one or more lysine residues are methylated.

Its function is as follows. Forms part of the ribosomal stalk which helps the ribosome interact with GTP-bound translation factors. This chain is Large ribosomal subunit protein uL11, found in Ligilactobacillus salivarius (strain UCC118) (Lactobacillus salivarius).